Here is a 482-residue protein sequence, read N- to C-terminus: Mannose-1-phosphate guanylyltransferase 2 (482 aa).

It belongs to the mannose-6-phosphate isomerase type 2 family.

It carries out the reaction alpha-D-mannose 1-phosphate + GTP + H(+) = GDP-alpha-D-mannose + diphosphate. It participates in nucleotide-sugar biosynthesis; GDP-alpha-D-mannose biosynthesis; GDP-alpha-D-mannose from alpha-D-mannose 1-phosphate (GTP route): step 1/1. Its function is as follows. Involved in GDP-mannose biosynthesis which serves as the activated sugar nucleotide precursor for mannose residues in cell surface polysaccharides. This enzyme participates in synthesis of the LPS O antigen. The polypeptide is Mannose-1-phosphate guanylyltransferase 2 (manC2) (Escherichia coli O157:H7).